We begin with the raw amino-acid sequence, 707 residues long: Elongation factor G 2 (707 aa).

A tr-type G domain is found at 8–290 (ERYRNIGISA…AVIDYLPSPA (283 aa)). GTP is bound by residues 17–24 (AHIDAGKT), 88–92 (DTPGH), and 142–145 (NKMD).

This sequence belongs to the TRAFAC class translation factor GTPase superfamily. Classic translation factor GTPase family. EF-G/EF-2 subfamily.

The protein localises to the cytoplasm. Functionally, catalyzes the GTP-dependent ribosomal translocation step during translation elongation. During this step, the ribosome changes from the pre-translocational (PRE) to the post-translocational (POST) state as the newly formed A-site-bound peptidyl-tRNA and P-site-bound deacylated tRNA move to the P and E sites, respectively. Catalyzes the coordinated movement of the two tRNA molecules, the mRNA and conformational changes in the ribosome. In Bordetella bronchiseptica (strain ATCC BAA-588 / NCTC 13252 / RB50) (Alcaligenes bronchisepticus), this protein is Elongation factor G 2.